The following is a 440-amino-acid chain: V-type ATP synthase beta chain (440 aa).

The protein belongs to the ATPase alpha/beta chains family.

Produces ATP from ADP in the presence of a proton gradient across the membrane. The V-type beta chain is a regulatory subunit. This Geotalea uraniireducens (strain Rf4) (Geobacter uraniireducens) protein is V-type ATP synthase beta chain.